A 59-amino-acid polypeptide reads, in one-letter code: Large ribosomal subunit protein uL30 (59 aa).

The protein belongs to the universal ribosomal protein uL30 family. As to quaternary structure, part of the 50S ribosomal subunit.

The chain is Large ribosomal subunit protein uL30 from Enterobacter sp. (strain 638).